The primary structure comprises 347 residues: NADH-ubiquinone oxidoreductase chain 2 (347 aa).

The next 11 helical transmembrane spans lie at 1–21 (MNPL…MMVV), 25–45 (HWLL…PIMM), 59–79 (YLLT…INLM), 96–116 (TLMT…FWVP), 122–142 (IPLT…LSIL), 149–169 (INLH…GWGG), 178–198 (IMAY…LYNP), 200–220 (LTLL…MLFI), 237–257 (MPVI…LPPL), 274–294 (DMLI…YFYM), and 325–345 (LLPT…MLSI).

This sequence belongs to the complex I subunit 2 family. As to quaternary structure, core subunit of respiratory chain NADH dehydrogenase (Complex I) which is composed of 45 different subunits. Interacts with TMEM242.

It is found in the mitochondrion inner membrane. It catalyses the reaction a ubiquinone + NADH + 5 H(+)(in) = a ubiquinol + NAD(+) + 4 H(+)(out). Its function is as follows. Core subunit of the mitochondrial membrane respiratory chain NADH dehydrogenase (Complex I) which catalyzes electron transfer from NADH through the respiratory chain, using ubiquinone as an electron acceptor. Essential for the catalytic activity and assembly of complex I. The polypeptide is NADH-ubiquinone oxidoreductase chain 2 (Balaenoptera physalus (Fin whale)).